The sequence spans 405 residues: Phosphopentomutase (405 aa).

Mn(2+)-binding residues include D10, D303, H308, D344, H345, and H356.

It belongs to the phosphopentomutase family. The cofactor is Mn(2+).

Its subcellular location is the cytoplasm. The catalysed reaction is 2-deoxy-alpha-D-ribose 1-phosphate = 2-deoxy-D-ribose 5-phosphate. It carries out the reaction alpha-D-ribose 1-phosphate = D-ribose 5-phosphate. The protein operates within carbohydrate degradation; 2-deoxy-D-ribose 1-phosphate degradation; D-glyceraldehyde 3-phosphate and acetaldehyde from 2-deoxy-alpha-D-ribose 1-phosphate: step 1/2. Isomerase that catalyzes the conversion of deoxy-ribose 1-phosphate (dRib-1-P) and ribose 1-phosphate (Rib-1-P) to deoxy-ribose 5-phosphate (dRib-5-P) and ribose 5-phosphate (Rib-5-P), respectively. The protein is Phosphopentomutase of Shewanella denitrificans (strain OS217 / ATCC BAA-1090 / DSM 15013).